The chain runs to 99 residues: Nucleoid-associated protein str1598 (99 aa).

Belongs to the YbaB/EbfC family. In terms of assembly, homodimer.

The protein resides in the cytoplasm. Its subcellular location is the nucleoid. Its function is as follows. Binds to DNA and alters its conformation. May be involved in regulation of gene expression, nucleoid organization and DNA protection. The protein is Nucleoid-associated protein str1598 of Streptococcus thermophilus (strain CNRZ 1066).